A 247-amino-acid chain; its full sequence is Neurotrophic factor BDNF precursor form (247 aa).

Positions M1 to A18 are cleaved as a signal peptide. The propeptide occupies A19–R128. N121 carries an N-linked (GlcNAc...) asparagine glycan. Disulfide bonds link C141–C208, C186–C237, and C196–C239.

The protein belongs to the NGF-beta family. As to quaternary structure, monomers and homodimers. Binds to NTRK2/TRKB. Can form heterodimers with other neurotrophin family members, such as NTF3 and NTF4 (in vitro), but the physiological relevance of this is not clear. BDNF precursor form: interacts with the heterodimer formed by NGFR and SORCS2. N-glycosylated and glycosulfated, contrary to mature BDNF. Post-translationally, mature BDNF is produced by proteolytic removal of the propeptide, catalyzed by a FURIN family member. In addition, the precursor form is proteolytically cleaved within the propeptide, but this is not an obligatory intermediate for the production of mature BDNF. Can be converted into mature BDNF by plasmin (PLG). In terms of tissue distribution, detected in blood plasma and in saliva (at protein level). Brain. Highly expressed in hippocampus, amygdala, cerebral cortex and cerebellum. Also expressed in heart, lung, skeletal muscle, testis, prostate and placenta.

Its subcellular location is the secreted. Important signaling molecule that activates signaling cascades downstream of NTRK2. During development, promotes the survival and differentiation of selected neuronal populations of the peripheral and central nervous systems. Participates in axonal growth, pathfinding and in the modulation of dendritic growth and morphology. Major regulator of synaptic transmission and plasticity at adult synapses in many regions of the CNS. The versatility of BDNF is emphasized by its contribution to a range of adaptive neuronal responses including long-term potentiation (LTP), long-term depression (LTD), certain forms of short-term synaptic plasticity, as well as homeostatic regulation of intrinsic neuronal excitability. In terms of biological role, important signaling molecule that activates signaling cascades downstream of NTRK2. Activates signaling cascades via the heterodimeric receptor formed by NGFR and SORCS2. Signaling via NGFR and SORCS2 plays a role in synaptic plasticity and long-term depression (LTD). Binding to NGFR and SORCS2 promotes neuronal apoptosis. Promotes neuronal growth cone collapse. The chain is Neurotrophic factor BDNF precursor form from Homo sapiens (Human).